A 100-amino-acid chain; its full sequence is Aspartyl/glutamyl-tRNA(Asn/Gln) amidotransferase subunit C (100 aa).

Belongs to the GatC family. In terms of assembly, heterotrimer of A, B and C subunits.

It catalyses the reaction L-glutamyl-tRNA(Gln) + L-glutamine + ATP + H2O = L-glutaminyl-tRNA(Gln) + L-glutamate + ADP + phosphate + H(+). The catalysed reaction is L-aspartyl-tRNA(Asn) + L-glutamine + ATP + H2O = L-asparaginyl-tRNA(Asn) + L-glutamate + ADP + phosphate + 2 H(+). Functionally, allows the formation of correctly charged Asn-tRNA(Asn) or Gln-tRNA(Gln) through the transamidation of misacylated Asp-tRNA(Asn) or Glu-tRNA(Gln) in organisms which lack either or both of asparaginyl-tRNA or glutaminyl-tRNA synthetases. The reaction takes place in the presence of glutamine and ATP through an activated phospho-Asp-tRNA(Asn) or phospho-Glu-tRNA(Gln). The polypeptide is Aspartyl/glutamyl-tRNA(Asn/Gln) amidotransferase subunit C (Streptococcus gordonii (strain Challis / ATCC 35105 / BCRC 15272 / CH1 / DL1 / V288)).